An 823-amino-acid chain; its full sequence is MFYVIGGIIVSVVAFFFTIKFLFELAARVVSFLQNEDRERRGDRTIYDYVRGNYLDPRSCKVSWDWKDPYEVGHSMAFRVHLFYKNGQPFPAHRPVGLRVHISHVELAVDIPVTQEVLQEPNSNVVKVAFTVRKAGRYEITVKLGGLNVAYSPYYKIFQPGMVVPSKTKIVCHFSTLVLTCGQPHTLQIVPRDEYDNPTNNSMSLRDEHSYSLAIHELGPQEEENNEVSFEKSVTSNRQTCQVFLRLTLHSRGCFHACISYQNQPINNGEFDIIVLSENEKNIVERNVSTSGVSIYFEAYLYNANNCTSTPWHLPPMHMSSSQRRPSTAIEEDDEDSPSECHTPEKVKKPKKVYCYVSPKQFSVKEFYLKIIPWRLYTFRVCPGTKFSYLGPDPVHKLLTLVVDDGIQPPVELSCKERNILAATFIRSLHKNIGGSETFQDKVNFFQRELRQVHMKRPHSKVTLKVSRHALLESSLKATRNFSISDWSKNFEVVFQDEEALDWGGPRREWFELICKALFDTTSQLFARFTDSNQALVHPNPNRPAHLRLKMYEFAGRLVGKCLYESSLGGAYKQLVRARFTRSFLAQIIGLRMHYKYFETDDPEFYKSKVCFILNNDMSEMELVFAEEKYNKSGQLDKIVELMTGGAQTPVTNANKIFYLNLLAQYRLASQVKEEVEHFLKGLNELVPENLLAIFDENELELLMCGTGDINVSDFKAHAVVVGGSWHFREKVMRWFWAVVSSLTQEELARLLQFTTGSSQLPPGGFAALCPSFQIIAAPTHSTLPTAHTCFNQLCLPTYDSYEEVHRMLQLAISEGCEGFGML.

One copy of the Filamin repeat lies at 64 to 158 (WDWKDPYEVG…VAYSPYYKIF (95 aa)). Residues 315-345 (PPMHMSSSQRRPSTAIEEDDEDSPSECHTPE) are disordered. The interval 483 to 789 (SISDWSKNFE…THSTLPTAHT (307 aa)) is interaction with SOCS2. An HECT domain is found at 483–823 (SISDWSKNFE…SEGCEGFGML (341 aa)). The active-site Glycyl thioester intermediate is the Cys790.

Interacts with SOCS2. Interacts (via HECT domain) with HTRA2, DIABLO/SMAC and SEPTIN4; in the cytoplasm following induction of apoptosis. In terms of processing, autoubiquitinated in vitro in the presence of E2 enzyme UBE2D1/UBCH5A. As to expression, detected in brain, testis, heart, liver, lung and kidney with very low levels in skeletal muscle and spleen.

It carries out the reaction S-ubiquitinyl-[E2 ubiquitin-conjugating enzyme]-L-cysteine + [acceptor protein]-L-lysine = [E2 ubiquitin-conjugating enzyme]-L-cysteine + N(6)-ubiquitinyl-[acceptor protein]-L-lysine.. It participates in protein modification; protein ubiquitination. E3 ubiquitin-protein ligase that catalyzes 'Lys-11'- or 'Lys-33'-linked polyubiquitin chains, with some preference for 'Lys-33' linkages. E3 ubiquitin-protein ligases accept ubiquitin from an E2 ubiquitin-conjugating enzyme in the form of a thioester and then directly transfers the ubiquitin to targeted substrates. Ubiquitinates SEPTIN4, DIABLO/SMAC and HTRA2 in vitro. Modulates pulmonary inflammation by targeting SOCS2 for ubiquitination and subsequent degradation by the proteasome. The chain is Apoptosis-resistant E3 ubiquitin protein ligase 1 (Arel1) from Mus musculus (Mouse).